The primary structure comprises 165 residues: Thiol peroxidase (165 aa).

Residues 18–165 enclose the Thioredoxin domain; it reads PQVGDVVTDF…PNYDAALAVL (148 aa). Residue Cys-60 is the Cysteine sulfenic acid (-SOH) intermediate of the active site. Cys-60 and Cys-94 are oxidised to a cystine.

Belongs to the peroxiredoxin family. Tpx subfamily. As to quaternary structure, homodimer.

It carries out the reaction a hydroperoxide + [thioredoxin]-dithiol = an alcohol + [thioredoxin]-disulfide + H2O. Functionally, thiol-specific peroxidase that catalyzes the reduction of hydrogen peroxide and organic hydroperoxides to water and alcohols, respectively. Plays a role in cell protection against oxidative stress by detoxifying peroxides. This chain is Thiol peroxidase, found in Pasteurella multocida (strain Pm70).